A 410-amino-acid polypeptide reads, in one-letter code: Multifunctional CCA protein (410 aa).

ATP is bound by residues G8 and R11. CTP is bound by residues G8 and R11. Residues D21 and D23 each coordinate Mg(2+). ATP is bound by residues R91, R138, and R141. The CTP site is built by R91, R138, and R141. Positions 229–347 (TGIHQEMVSD…AQLALVCEAD (119 aa)) constitute an HD domain.

This sequence belongs to the tRNA nucleotidyltransferase/poly(A) polymerase family. Bacterial CCA-adding enzyme type 1 subfamily. Monomer. Can also form homodimers and oligomers. Mg(2+) serves as cofactor. It depends on Ni(2+) as a cofactor.

The catalysed reaction is a tRNA precursor + 2 CTP + ATP = a tRNA with a 3' CCA end + 3 diphosphate. It carries out the reaction a tRNA with a 3' CCA end + 2 CTP + ATP = a tRNA with a 3' CCACCA end + 3 diphosphate. In terms of biological role, catalyzes the addition and repair of the essential 3'-terminal CCA sequence in tRNAs without using a nucleic acid template. Adds these three nucleotides in the order of C, C, and A to the tRNA nucleotide-73, using CTP and ATP as substrates and producing inorganic pyrophosphate. tRNA 3'-terminal CCA addition is required both for tRNA processing and repair. Also involved in tRNA surveillance by mediating tandem CCA addition to generate a CCACCA at the 3' terminus of unstable tRNAs. While stable tRNAs receive only 3'-terminal CCA, unstable tRNAs are marked with CCACCA and rapidly degraded. The sequence is that of Multifunctional CCA protein from Xanthomonas euvesicatoria pv. vesicatoria (strain 85-10) (Xanthomonas campestris pv. vesicatoria).